A 328-amino-acid polypeptide reads, in one-letter code: GMP reductase (328 aa).

The active-site Thioimidate intermediate is the cysteine 176. 205-228 (IIADGGIRTHGDIAKSIRFGASMI) is a binding site for NADP(+).

It belongs to the IMPDH/GMPR family. GuaC type 2 subfamily.

The catalysed reaction is IMP + NH4(+) + NADP(+) = GMP + NADPH + 2 H(+). Catalyzes the irreversible NADPH-dependent deamination of GMP to IMP. It functions in the conversion of nucleobase, nucleoside and nucleotide derivatives of G to A nucleotides, and in maintaining the intracellular balance of A and G nucleotides. The protein is GMP reductase of Streptococcus pneumoniae serotype 19F (strain G54).